A 126-amino-acid chain; its full sequence is Large ribosomal subunit protein bL17 (126 aa).

The protein belongs to the bacterial ribosomal protein bL17 family. In terms of assembly, part of the 50S ribosomal subunit. Contacts protein L32.

This is Large ribosomal subunit protein bL17 from Lawsonia intracellularis (strain PHE/MN1-00).